We begin with the raw amino-acid sequence, 527 residues long: tRNA-2-methylthio-N(6)-dimethylallyladenosine synthase (527 aa).

Positions 1-27 (MMNEKQRLQYTAQIETDHPTDKKSALD) are disordered. Basic and acidic residues predominate over residues 15 to 27 (ETDHPTDKKSALD). Positions 84–202 (RKFYIRTYGC…LPYILKEAYM (119 aa)) constitute an MTTase N-terminal domain. Residues cysteine 93, cysteine 129, cysteine 163, cysteine 239, cysteine 243, and cysteine 246 each contribute to the [4Fe-4S] cluster site. The 231-residue stretch at 225-455 (RKGNIKAWVN…NALVNEISAK (231 aa)) folds into the Radical SAM core domain. The 64-residue stretch at 458–521 (KEYEGQVVEV…TWTLNGEMVE (64 aa)) folds into the TRAM domain.

It belongs to the methylthiotransferase family. MiaB subfamily. As to quaternary structure, monomer. [4Fe-4S] cluster is required as a cofactor.

It is found in the cytoplasm. The enzyme catalyses N(6)-dimethylallyladenosine(37) in tRNA + (sulfur carrier)-SH + AH2 + 2 S-adenosyl-L-methionine = 2-methylsulfanyl-N(6)-dimethylallyladenosine(37) in tRNA + (sulfur carrier)-H + 5'-deoxyadenosine + L-methionine + A + S-adenosyl-L-homocysteine + 2 H(+). Functionally, catalyzes the methylthiolation of N6-(dimethylallyl)adenosine (i(6)A), leading to the formation of 2-methylthio-N6-(dimethylallyl)adenosine (ms(2)i(6)A) at position 37 in tRNAs that read codons beginning with uridine. The protein is tRNA-2-methylthio-N(6)-dimethylallyladenosine synthase of Anoxybacillus flavithermus (strain DSM 21510 / WK1).